Reading from the N-terminus, the 201-residue chain is Large ribosomal subunit protein uL4 (201 aa).

The disordered stretch occupies residues Ala-45–Gly-66.

Belongs to the universal ribosomal protein uL4 family. In terms of assembly, part of the 50S ribosomal subunit.

In terms of biological role, one of the primary rRNA binding proteins, this protein initially binds near the 5'-end of the 23S rRNA. It is important during the early stages of 50S assembly. It makes multiple contacts with different domains of the 23S rRNA in the assembled 50S subunit and ribosome. Functionally, forms part of the polypeptide exit tunnel. The polypeptide is Large ribosomal subunit protein uL4 (Aeromonas salmonicida (strain A449)).